A 366-amino-acid polypeptide reads, in one-letter code: Chorismate synthase (366 aa).

Arg48 contacts NADP(+). FMN-binding positions include 131-133 (RAS), 243-244 (NA), Gly288, 303-307 (KPTSS), and Arg329.

Belongs to the chorismate synthase family. Homotetramer. The cofactor is FMNH2.

The catalysed reaction is 5-O-(1-carboxyvinyl)-3-phosphoshikimate = chorismate + phosphate. Its pathway is metabolic intermediate biosynthesis; chorismate biosynthesis; chorismate from D-erythrose 4-phosphate and phosphoenolpyruvate: step 7/7. Catalyzes the anti-1,4-elimination of the C-3 phosphate and the C-6 proR hydrogen from 5-enolpyruvylshikimate-3-phosphate (EPSP) to yield chorismate, which is the branch point compound that serves as the starting substrate for the three terminal pathways of aromatic amino acid biosynthesis. This reaction introduces a second double bond into the aromatic ring system. This Bartonella henselae (strain ATCC 49882 / DSM 28221 / CCUG 30454 / Houston 1) (Rochalimaea henselae) protein is Chorismate synthase.